The sequence spans 277 residues: Urease accessory protein UreD (277 aa).

This sequence belongs to the UreD family. As to quaternary structure, ureD, UreF and UreG form a complex that acts as a GTP-hydrolysis-dependent molecular chaperone, activating the urease apoprotein by helping to assemble the nickel containing metallocenter of UreC. The UreE protein probably delivers the nickel.

Its subcellular location is the cytoplasm. Its function is as follows. Required for maturation of urease via the functional incorporation of the urease nickel metallocenter. The protein is Urease accessory protein UreD of Yersinia pestis (strain Pestoides F).